A 688-amino-acid polypeptide reads, in one-letter code: Eukaryotic translation initiation factor 3 subunit B (688 aa).

Residues 1–32 (MAKKKGENYDSDGGDDQDYDEEPNFDDPEGFV) form a disordered region. A compositionally biased stretch (acidic residues) spans 9–32 (YDSDGGDDQDYDEEPNFDDPEGFV). An RRM domain is found at 57–141 (NVIVVDNIPV…HTLLVNLFSD (85 aa)). WD repeat units lie at residues 208 to 246 (RDRF…KINK), 247 to 287 (FPHS…EKRS), 291 to 329 (DGTS…LLDK), 332 to 367 (IKVQ…TLLE), 440 to 482 (EVKE…EPTM), and 527 to 572 (GDHF…KRVN). Residues 613 to 642 (RIRMTRASKELLEKRAKLREQFVEYRTKRV) adopt a coiled-coil conformation.

This sequence belongs to the eIF-3 subunit B family. Component of the eukaryotic translation initiation factor 3 (eIF-3) complex.

The protein resides in the cytoplasm. RNA-binding component of the eukaryotic translation initiation factor 3 (eIF-3) complex, which is involved in protein synthesis of a specialized repertoire of mRNAs and, together with other initiation factors, stimulates binding of mRNA and methionyl-tRNAi to the 40S ribosome. The eIF-3 complex specifically targets and initiates translation of a subset of mRNAs involved in cell proliferation. The protein is Eukaryotic translation initiation factor 3 subunit B of Aedes aegypti (Yellowfever mosquito).